Here is an 892-residue protein sequence, read N- to C-terminus: Isoleucine--tRNA ligase (892 aa).

Positions 60-70 (PYANGSIHIGH) match the 'HIGH' region motif. Glutamate 552 contributes to the L-isoleucyl-5'-AMP binding site. The short motif at 593 to 597 (KMSKS) is the 'KMSKS' region element. Lysine 596 contacts ATP. 4 residues coordinate Zn(2+): cysteine 862, cysteine 865, cysteine 879, and cysteine 882.

It belongs to the class-I aminoacyl-tRNA synthetase family. IleS type 1 subfamily. Monomer. Requires Zn(2+) as cofactor.

The protein resides in the cytoplasm. The enzyme catalyses tRNA(Ile) + L-isoleucine + ATP = L-isoleucyl-tRNA(Ile) + AMP + diphosphate. Catalyzes the attachment of isoleucine to tRNA(Ile). As IleRS can inadvertently accommodate and process structurally similar amino acids such as valine, to avoid such errors it has two additional distinct tRNA(Ile)-dependent editing activities. One activity is designated as 'pretransfer' editing and involves the hydrolysis of activated Val-AMP. The other activity is designated 'posttransfer' editing and involves deacylation of mischarged Val-tRNA(Ile). The polypeptide is Isoleucine--tRNA ligase (Mycoplasmopsis agalactiae (strain NCTC 10123 / CIP 59.7 / PG2) (Mycoplasma agalactiae)).